A 518-amino-acid polypeptide reads, in one-letter code: D-aminopeptidase (518 aa).

Ser62 functions as the Nucleophile in the catalytic mechanism. Lys65 acts as the Proton donor/acceptor in catalysis. Residues 373–392 are disordered; sequence FGTGPEKMDISGENEAQSSM. The important for specificity stretch occupies residues 477-487; sequence QRSMDAPSPGE. Asp481 is a binding site for substrate.

It belongs to the peptidase S12 family. Homodimer.

The enzyme catalyses Release of an N-terminal D-amino acid from a peptide, Xaa-|-Yaa-, in which Xaa is preferably D-Ala, D-Ser or D-Thr. D-amino acid amides and methyl esters also are hydrolyzed, as is glycine amide.. Its activity is regulated as follows. Inhibited by beta-lactam compounds such as 6-aminopenicillic acid, 7-aminocephalosporanic acid, benzylpenicillin and ampicillin. Inhibited by p-chloromercuribenzoate. Functionally, hydrolyzes N-terminal residues in D-amino acid-containing peptides. This Brucella melitensis biotype 2 (strain ATCC 23457) protein is D-aminopeptidase.